The chain runs to 324 residues: Beta-ketoacyl-[acyl-carrier-protein] synthase III (324 aa).

Catalysis depends on residues Cys112 and His249. An ACP-binding region spans residues 250 to 254 (QANRR). Residue Asn279 is part of the active site.

The protein belongs to the thiolase-like superfamily. FabH family. In terms of assembly, homodimer.

It is found in the cytoplasm. It carries out the reaction malonyl-[ACP] + acetyl-CoA + H(+) = 3-oxobutanoyl-[ACP] + CO2 + CoA. The protein operates within lipid metabolism; fatty acid biosynthesis. Its function is as follows. Catalyzes the condensation reaction of fatty acid synthesis by the addition to an acyl acceptor of two carbons from malonyl-ACP. Catalyzes the first condensation reaction which initiates fatty acid synthesis and may therefore play a role in governing the total rate of fatty acid production. Possesses both acetoacetyl-ACP synthase and acetyl transacylase activities. Its substrate specificity determines the biosynthesis of branched-chain and/or straight-chain of fatty acids. The chain is Beta-ketoacyl-[acyl-carrier-protein] synthase III from Streptococcus equi subsp. zooepidemicus (strain MGCS10565).